Reading from the N-terminus, the 111-residue chain is Rhodanese domain-containing protein CG4456 (111 aa).

The Rhodanese domain maps to 12–110 (NHPDVYLIDV…SWNEWAQKEG (99 aa)).

The polypeptide is Rhodanese domain-containing protein CG4456 (Drosophila melanogaster (Fruit fly)).